A 623-amino-acid polypeptide reads, in one-letter code: Transketolase (623 aa).

At Met1 the chain carries N-acetylmethionine. Lys6 and Lys11 each carry N6-acetyllysine. His37 lines the substrate pocket. Thiamine diphosphate is bound by residues Ser40 and His77. Position 104 is a phosphoserine (Ser104). 123–125 (GSL) is a thiamine diphosphate binding site. An N6-acetyllysine modification is found at Lys144. Asp155 lines the Mg(2+) pocket. The thiamine diphosphate site is built by Gly156 and Asn185. Residues Asn185 and Leu187 each contribute to the Mg(2+) site. N6-acetyllysine occurs at positions 204, 232, and 241. 2 residues coordinate thiamine diphosphate: Lys244 and His258. His258 provides a ligand contact to substrate. An N6-acetyllysine modification is found at Lys260. Tyr275 carries the post-translational modification Phosphotyrosine. Thr287 is subject to Phosphothreonine. Ser295 is subject to Phosphoserine. Arg318 is a binding site for substrate. Lys352 participates in a covalent cross-link: Glycyl lysine isopeptide (Lys-Gly) (interchain with G-Cter in SUMO2). Catalysis depends on Glu366, which acts as the Proton donor. Phe392 contributes to the thiamine diphosphate binding site. Positions 416 and 424 each coordinate substrate. Gln428 provides a ligand contact to thiamine diphosphate. Arg474 provides a ligand contact to substrate. An N6-acetyllysine mark is found at Lys538 and Lys603.

It belongs to the transketolase family. Homodimer. Requires Mg(2+) as cofactor. It depends on Ca(2+) as a cofactor. The cofactor is Mn(2+). Co(2+) is required as a cofactor. Thiamine diphosphate serves as cofactor.

It carries out the reaction D-sedoheptulose 7-phosphate + D-glyceraldehyde 3-phosphate = aldehydo-D-ribose 5-phosphate + D-xylulose 5-phosphate. In terms of biological role, catalyzes the transfer of a two-carbon ketol group from a ketose donor to an aldose acceptor, via a covalent intermediate with the cofactor thiamine pyrophosphate. This is Transketolase (TKT) from Pongo abelii (Sumatran orangutan).